The primary structure comprises 378 residues: Isobutylamine N-hydroxylase (378 aa).

Exists in dimeric or trimeric form depending upon buffer conditions. It can form an isobutylamine N-hydroxylase two component enzyme system formed of a flavin reductase component (VlmR) and a monooxygenase component (VlmH).

The catalysed reaction is 2-methylpropan-1-amine + FADH2 + O2 = N-(2-methylpropyl)hydroxylamine + FAD + H2O + 2 H(+). The enzyme catalyses 2-methylpropan-1-amine + FMNH2 + O2 = N-(2-methylpropyl)hydroxylamine + FMN + H2O + 2 H(+). With respect to regulation, inhibited by 5',5'-dithio-bis(2-nitrobenzoic acid) (DTNB) and 4-(hydroxymercuri)benzoic acid (p-HMB). In terms of biological role, involved in the biosynthesis of the azoxy antibiotic valanimycin, which has an antitumor activity. Catalyzes the oxidation of isobutylamine to isobutylhydroxylamine via the formation of a flavin 4a-hydroperoxide. Unlike other known N-hydroxylases, isobutylamine N-hydroxylase cannot carry out the reduction of the flavin cofactor and requires the NADPH-flavin oxidoreductase VlmR. Also able to oxidize propan-1-amine, butan-1-amine, butan-2-amine and benzylamine. It has a similar activity with either FMNH(2) or FADH(2). The protein is Isobutylamine N-hydroxylase of Streptomyces viridifaciens.